A 681-amino-acid chain; its full sequence is Elongation factor G (681 aa).

The tr-type G domain maps to 5–279; sequence KNIRNIGIIA…SIVNFLPSPI (275 aa). GTP is bound by residues 14–21, 82–86, and 136–139; these read AHVDAGKT, DTPGH, and NKLD.

Belongs to the TRAFAC class translation factor GTPase superfamily. Classic translation factor GTPase family. EF-G/EF-2 subfamily.

Its subcellular location is the cytoplasm. In terms of biological role, catalyzes the GTP-dependent ribosomal translocation step during translation elongation. During this step, the ribosome changes from the pre-translocational (PRE) to the post-translocational (POST) state as the newly formed A-site-bound peptidyl-tRNA and P-site-bound deacylated tRNA move to the P and E sites, respectively. Catalyzes the coordinated movement of the two tRNA molecules, the mRNA and conformational changes in the ribosome. In Carsonella ruddii (strain PV), this protein is Elongation factor G.